The following is a 60-amino-acid chain: Potassium channel toxin alpha-KTx 3.6 (60 aa).

Residues 1–22 (MKVFFAVLITLFICSMIIGIHG) form the signal peptide. 3 disulfides stabilise this stretch: Cys-29-Cys-49, Cys-35-Cys-54, and Cys-39-Cys-56. Lys-59 carries the lysine amide modification.

Belongs to the short scorpion toxin superfamily. Potassium channel inhibitor family. Alpha-KTx 03 subfamily. Expressed by the venom gland.

Its subcellular location is the secreted. In terms of biological role, blocks voltage-gated potassium channels. At 2 uM, blocks rat Kv1.1/KCNA1 and Kv1.3/KCNA3, has a strong effect on rat Kv1.2/KCNA2 and Kv1.6/KCNA6 as well as a moderate effect on Shaker IR. The chain is Potassium channel toxin alpha-KTx 3.6 from Olivierus martensii (Manchurian scorpion).